A 505-amino-acid chain; its full sequence is Megakaryocyte-associated tyrosine-protein kinase (505 aa).

One can recognise an SH3 domain in the interval 46-108; sequence APGTQCMTKC…AAAALRHGEA (63 aa). Residues 120–209 enclose the SH2 domain; the sequence is WFHGKISGQE…AICTKLVKPR (90 aa). Positions 233-481 constitute a Protein kinase domain; sequence LTLGAQIGEG…IVEKLGRELR (249 aa). Residues 239–247 and Lys-260 contribute to the ATP site; that span reads IGEGEFGAV. Catalysis depends on Asp-350, which acts as the Proton acceptor. The segment at 483–505 is disordered; sequence VGVSAPAGGQEAEGSAPTRSQDP.

Belongs to the protein kinase superfamily. Tyr protein kinase family. CSK subfamily. In terms of assembly, interacts with KIT. In terms of tissue distribution, most abundant in brain, and to a lesser extent in the spleen, the thymus and the liver. Also found in the T-cell lineage.

Its subcellular location is the cytoplasm. The protein resides in the membrane. The enzyme catalyses L-tyrosyl-[protein] + ATP = O-phospho-L-tyrosyl-[protein] + ADP + H(+). Its function is as follows. Could play a significant role in the signal transduction of hematopoietic cells. May regulate tyrosine kinase activity of SRC-family members in brain by specifically phosphorylating their C-terminal regulatory tyrosine residue which acts as a negative regulatory site. It may play an inhibitory role in the control of T-cell proliferation. This Mus musculus (Mouse) protein is Megakaryocyte-associated tyrosine-protein kinase (Matk).